Consider the following 175-residue polypeptide: Ribosome maturation factor RimM (175 aa).

One can recognise a PRC barrel domain in the interval 98–175 (EGEYYWYQLE…EMRVDWDADF (78 aa)).

The protein belongs to the RimM family. Binds ribosomal protein uS19.

The protein localises to the cytoplasm. Functionally, an accessory protein needed during the final step in the assembly of 30S ribosomal subunit, possibly for assembly of the head region. Essential for efficient processing of 16S rRNA. May be needed both before and after RbfA during the maturation of 16S rRNA. It has affinity for free ribosomal 30S subunits but not for 70S ribosomes. This Pseudomonas paraeruginosa (strain DSM 24068 / PA7) (Pseudomonas aeruginosa (strain PA7)) protein is Ribosome maturation factor RimM.